The following is a 493-amino-acid chain: Amidophosphoribosyltransferase (493 aa).

Positions 1–26 (MIPTQPLTADLDCDLGLERPDRPEEA) are excised as a propeptide. Cysteine 27 acts as the Nucleophile in catalysis. The Glutamine amidotransferase type-2 domain occupies 27 to 252 (CGVFALYAPG…PGEMVRITDA (226 aa)). Position 268 (cysteine 268) interacts with [4Fe-4S] cluster. Residues serine 315, aspartate 377, and aspartate 378 each coordinate Mg(2+). [4Fe-4S] cluster is bound by residues cysteine 414, cysteine 465, and cysteine 468.

It in the C-terminal section; belongs to the purine/pyrimidine phosphoribosyltransferase family. Mg(2+) is required as a cofactor. Requires [4Fe-4S] cluster as cofactor.

It catalyses the reaction 5-phospho-beta-D-ribosylamine + L-glutamate + diphosphate = 5-phospho-alpha-D-ribose 1-diphosphate + L-glutamine + H2O. The protein operates within purine metabolism; IMP biosynthesis via de novo pathway; N(1)-(5-phospho-D-ribosyl)glycinamide from 5-phospho-alpha-D-ribose 1-diphosphate: step 1/2. Functionally, catalyzes the formation of phosphoribosylamine from phosphoribosylpyrophosphate (PRPP) and glutamine. This chain is Amidophosphoribosyltransferase, found in Synechococcus elongatus (strain ATCC 33912 / PCC 7942 / FACHB-805) (Anacystis nidulans R2).